Consider the following 159-residue polypeptide: Ribosomal RNA large subunit methyltransferase H (159 aa).

S-adenosyl-L-methionine-binding positions include Leu76, Gly108, and 127 to 132 (FGLLTL).

This sequence belongs to the RNA methyltransferase RlmH family. Homodimer.

It localises to the cytoplasm. It carries out the reaction pseudouridine(1915) in 23S rRNA + S-adenosyl-L-methionine = N(3)-methylpseudouridine(1915) in 23S rRNA + S-adenosyl-L-homocysteine + H(+). Its function is as follows. Specifically methylates the pseudouridine at position 1915 (m3Psi1915) in 23S rRNA. This is Ribosomal RNA large subunit methyltransferase H from Leuconostoc mesenteroides subsp. mesenteroides (strain ATCC 8293 / DSM 20343 / BCRC 11652 / CCM 1803 / JCM 6124 / NCDO 523 / NBRC 100496 / NCIMB 8023 / NCTC 12954 / NRRL B-1118 / 37Y).